A 432-amino-acid chain; its full sequence is MSQSDIFFDHKHIWHPYSSMVNPLPCYSVISAKGVYLKLKNGKNIIDGMSSWWSTIHGYNHPILNKSLKKQIRKMSHVMFGGITHPSAILLCRKLLKLTPKKLDCVFLSDSGSIAIEVAIKMLIQYWEALGQKRTQILTIKNGYHGDTFSAMSISDPNNSMHKIYNKFLPKNLFAETPTSSFHKEWNSIDIQSFKKIIEKKSKKIAGVILEPIVQGVGGMNFYHPTYLKEIKKLCKAYSIPLVFDEIATGFGRTGKFFAFQHANVIPDILCLGKAMTGGTITLAATLTSRNIAHTISSSKVSCFMHGPTYMGNPLACAVANANIKILEKNEWKKQVINIEKQLCQSLLPLIHHPRVVDVRVLGAIGVVECFHFVNMALIQKFFVKNGVWIRPFKKIIYIVPPYIISMNCLKKLINVIEKSLDNDTLFNVENI.

Residue Trp52 coordinates substrate. Residue 112–113 (GS) coordinates pyridoxal 5'-phosphate. A substrate-binding site is contributed by Tyr144. Asp245 contacts pyridoxal 5'-phosphate. Residues Lys274 and Gly307 each contribute to the substrate site. Position 274 is an N6-(pyridoxal phosphate)lysine (Lys274). 308–309 (PT) contributes to the pyridoxal 5'-phosphate binding site. Position 391 (Arg391) interacts with substrate.

This sequence belongs to the class-III pyridoxal-phosphate-dependent aminotransferase family. BioA subfamily. As to quaternary structure, homodimer. Pyridoxal 5'-phosphate serves as cofactor.

It localises to the cytoplasm. It catalyses the reaction (8S)-8-amino-7-oxononanoate + S-adenosyl-L-methionine = S-adenosyl-4-methylsulfanyl-2-oxobutanoate + (7R,8S)-7,8-diammoniononanoate. It participates in cofactor biosynthesis; biotin biosynthesis; 7,8-diaminononanoate from 8-amino-7-oxononanoate (SAM route): step 1/1. Functionally, catalyzes the transfer of the alpha-amino group from S-adenosyl-L-methionine (SAM) to 7-keto-8-aminopelargonic acid (KAPA) to form 7,8-diaminopelargonic acid (DAPA). It is the only aminotransferase known to utilize SAM as an amino donor. The chain is Adenosylmethionine-8-amino-7-oxononanoate aminotransferase from Buchnera aphidicola subsp. Schizaphis graminum (strain Sg).